Reading from the N-terminus, the 104-residue chain is Cytochrome c-551 (104 aa).

The signal sequence occupies residues 1–22; that stretch reads MKKILIPMLALGGALAMQPALA. Heme c is bound by residues Cys-34, Cys-37, His-38, and Met-83.

Post-translationally, binds 1 heme c group covalently per subunit.

It is found in the periplasm. In terms of biological role, electron donor for cytochrome cd1 in nitrite and nitrate respiration. This is Cytochrome c-551 (nirM) from Stutzerimonas stutzeri (Pseudomonas stutzeri).